A 578-amino-acid chain; its full sequence is Sulfite reductase [NADPH] hemoprotein beta-component (578 aa).

A compositionally biased stretch (polar residues) spans 1-11 (MSANQQSNSQE). The interval 1–20 (MSANQQSNSQEVLGEVLGPL) is disordered. C441, C447, C487, and C491 together coordinate [4Fe-4S] cluster. Residue C491 participates in siroheme binding.

Belongs to the nitrite and sulfite reductase 4Fe-4S domain family. As to quaternary structure, alpha(8)-beta(8). The alpha component is a flavoprotein, the beta component is a hemoprotein. Siroheme serves as cofactor. Requires [4Fe-4S] cluster as cofactor.

The enzyme catalyses hydrogen sulfide + 3 NADP(+) + 3 H2O = sulfite + 3 NADPH + 4 H(+). It functions in the pathway sulfur metabolism; hydrogen sulfide biosynthesis; hydrogen sulfide from sulfite (NADPH route): step 1/1. Functionally, component of the sulfite reductase complex that catalyzes the 6-electron reduction of sulfite to sulfide. This is one of several activities required for the biosynthesis of L-cysteine from sulfate. The chain is Sulfite reductase [NADPH] hemoprotein beta-component from Vibrio campbellii (strain ATCC BAA-1116).